The primary structure comprises 845 residues: Translation initiation factor IF-2 (845 aa).

Basic and acidic residues-rich tracts occupy residues 139–198 (EAKR…EKPA) and 206–228 (FRSE…KELH). A disordered region spans residues 139-253 (EAKRQAAEEE…PQKAAPAAKH (115 aa)). The region spanning 345–512 (SRAAVVTIMG…AILLQAEVME (168 aa)) is the tr-type G domain. Residues 354–361 (GHVDHGKT) form a G1 region. 354 to 361 (GHVDHGKT) contacts GTP. The tract at residues 379–383 (GITQH) is G2. A G3 region spans residues 400-403 (DTPG). Residues 400-404 (DTPGH) and 454-457 (NKID) each bind GTP. The G4 stretch occupies residues 454-457 (NKID). A G5 region spans residues 490-492 (SAK).

The protein belongs to the TRAFAC class translation factor GTPase superfamily. Classic translation factor GTPase family. IF-2 subfamily.

The protein resides in the cytoplasm. In terms of biological role, one of the essential components for the initiation of protein synthesis. Protects formylmethionyl-tRNA from spontaneous hydrolysis and promotes its binding to the 30S ribosomal subunits. Also involved in the hydrolysis of GTP during the formation of the 70S ribosomal complex. This is Translation initiation factor IF-2 from Nitrosococcus oceani (strain ATCC 19707 / BCRC 17464 / JCM 30415 / NCIMB 11848 / C-107).